We begin with the raw amino-acid sequence, 217 residues long: 3,4-dihydroxy-2-butanone 4-phosphate synthase (217 aa).

Residues 37–38 (RE), Asp-42, 150–154 (RRGHT), and Glu-174 contribute to the D-ribulose 5-phosphate site. Glu-38 is a Mg(2+) binding site. His-153 serves as a coordination point for Mg(2+).

This sequence belongs to the DHBP synthase family. As to quaternary structure, homodimer. Requires Mg(2+) as cofactor. Mn(2+) serves as cofactor.

The catalysed reaction is D-ribulose 5-phosphate = (2S)-2-hydroxy-3-oxobutyl phosphate + formate + H(+). It participates in cofactor biosynthesis; riboflavin biosynthesis; 2-hydroxy-3-oxobutyl phosphate from D-ribulose 5-phosphate: step 1/1. In terms of biological role, catalyzes the conversion of D-ribulose 5-phosphate to formate and 3,4-dihydroxy-2-butanone 4-phosphate. In Yersinia enterocolitica serotype O:8 / biotype 1B (strain NCTC 13174 / 8081), this protein is 3,4-dihydroxy-2-butanone 4-phosphate synthase.